Reading from the N-terminus, the 160-residue chain is Transcription antitermination protein NusB (160 aa).

The protein belongs to the NusB family.

Its function is as follows. Involved in transcription antitermination. Required for transcription of ribosomal RNA (rRNA) genes. Binds specifically to the boxA antiterminator sequence of the ribosomal RNA (rrn) operons. This chain is Transcription antitermination protein NusB, found in Allorhizobium ampelinum (strain ATCC BAA-846 / DSM 112012 / S4) (Agrobacterium vitis (strain S4)).